A 479-amino-acid chain; its full sequence is 5-hydroxytryptamine receptor 7 (479 aa).

Over 1 to 83 (MMDVNSSGRP…INYGRVEKVV (83 aa)) the chain is Extracellular. N-linked (GlcNAc...) asparagine glycosylation is found at asparagine 5 and asparagine 66. Residues 84–108 (IGSILTLITLLTIAGNCLVVISVCF) form a helical membrane-spanning segment. The Cytoplasmic portion of the chain corresponds to 109-118 (VKKLRQPSNY). The chain crosses the membrane as a helical span at residues 119 to 140 (LIVSLALADLSVAVAVMPFVSV). Residues 141–152 (TDLIGGKWIFGH) lie on the Extracellular side of the membrane. The chain crosses the membrane as a helical span at residues 153-178 (FFCNVFIAMDVMCCTASIMTLCVISI). The cysteines at positions 155 and 231 are disulfide-linked. Aspartate 162 serves as a coordination point for serotonin. At 179–198 (DRYLGITRPLTYPVRQNGKC) the chain is on the cytoplasmic side. Residues 199 to 219 (MAKMILSVWLLSASITLPPLF) traverse the membrane as a helical segment. Over 220 to 237 (GWAQNVNDDKVCLISQDF) the chain is Extracellular. The chain crosses the membrane as a helical span at residues 238 to 260 (GYTIYSTAVAFYIPMSVMLFMYY). At 261 to 326 (QIYKAARKSA…SIFKREQKAA (66 aa)) the chain is on the cytoplasmic side. A helical transmembrane segment spans residues 327 to 352 (TTLGIIVGAFTVCWLPFFLLSTARPF). Residues 353–363 (ICGTSCSCIPL) are Extracellular-facing. Residues 364 to 387 (WVERTFLWLGYANSLINPFIYAFF) form a helical membrane-spanning segment. Over 388–479 (NRDLRTTYRS…TVEKKVMIHD (92 aa)) the chain is Cytoplasmic. Cysteine 401 carries S-palmitoyl cysteine lipidation.

The protein belongs to the G-protein coupled receptor 1 family. In terms of tissue distribution, predominant isoform in spleen, caudate and hippocampus. Expressed at lower levels. As to expression, minor isoform in terms of expression.

The protein localises to the cell membrane. In terms of biological role, G-protein coupled receptor for 5-hydroxytryptamine (serotonin), a biogenic hormone that functions as a neurotransmitter, a hormone and a mitogen. Ligand binding causes a conformation change that triggers signaling via guanine nucleotide-binding proteins (G proteins) and modulates the activity of downstream effectors. HTR7 is coupled to G(s) G alpha proteins and mediates activation of adenylate cyclase activity. This Homo sapiens (Human) protein is 5-hydroxytryptamine receptor 7.